We begin with the raw amino-acid sequence, 438 residues long: MAKPVVAIVGRANVGKSTLFNKLIKKRIAITQDDPGVTRDRLYMEAEWQNKYFTVVDTGGLEPKSNEIITKNIKKQTELAIETADVILFMVDGKQGITPIDMEVADMLRRTKKSVILVVNKIDHIKQQDNVYDFYNLGFYEIFPISASNSMGLGDLLEAVVSKFDDNSNTESDDDITKVCLIGKPNVGKSSLINNLLNEERMIVTDIAGTTRDAIDSKINYKGNEYIFIDTAGLRKRKKIDTEVERYSVVRTLSAIDRSDICVLMIDATEGVSEQDTKILGYAHDQGKAMIILVNKWDLVEKQTNTMNDFKKDIRTKLGFVMYVPIVFISVKENKRIDTLFTEIEKVDNNYSMRISTGVLNDVISKAVLLNPPPSDKGVRLKIFYITQIEARPPKFLVFINRNDLMHFSYQRYIENQLRENFSFEGVPLQFEFKTRGK.

2 EngA-type G domains span residues proline 4–serine 168 and threonine 177–serine 352. Residues glycine 10 to serine 17, aspartate 57 to leucine 61, asparagine 120 to aspartate 123, glycine 183 to serine 190, aspartate 230 to leucine 234, and asparagine 295 to aspartate 298 contribute to the GTP site. Positions methionine 353–glycine 437 constitute a KH-like domain.

The protein belongs to the TRAFAC class TrmE-Era-EngA-EngB-Septin-like GTPase superfamily. EngA (Der) GTPase family. As to quaternary structure, associates with the 50S ribosomal subunit.

GTPase that plays an essential role in the late steps of ribosome biogenesis. This chain is GTPase Der, found in Finegoldia magna (strain ATCC 29328 / DSM 20472 / WAL 2508) (Peptostreptococcus magnus).